We begin with the raw amino-acid sequence, 290 residues long: tRNA pseudouridine synthase A (290 aa).

D56 (nucleophile) is an active-site residue. Substrate is bound at residue Y109.

It belongs to the tRNA pseudouridine synthase TruA family.

The catalysed reaction is uridine(38/39/40) in tRNA = pseudouridine(38/39/40) in tRNA. Functionally, formation of pseudouridine at positions 38, 39 and 40 in the anticodon stem and loop of transfer RNAs. This chain is tRNA pseudouridine synthase A, found in Methanobrevibacter smithii (strain ATCC 35061 / DSM 861 / OCM 144 / PS).